Consider the following 428-residue polypeptide: Pregnancy-specific beta-1-glycoprotein 3 (428 aa).

The first 34 residues, 1 to 34, serve as a signal peptide directing secretion; sequence MGPLSAPPCTQRITWKGLLLTALLLNFWNLPTTA. An Ig-like V-type domain is found at 35–144; sequence QVTIEAEPTK…TGHFTFTLYL (110 aa). Residues asparagine 104 and asparagine 111 are each glycosylated (N-linked (GlcNAc...) asparagine). Residues 127–129 carry the Cell attachment site motif; the sequence is RGD. Ig-like C2-type domains are found at residues 147-234, 240-327, and 335-410; these read PKPS…VTLN, PKPY…VTLN, and PRIY…KSMT. 3 cysteine pairs are disulfide-bonded: cysteine 169-cysteine 217, cysteine 262-cysteine 310, and cysteine 354-cysteine 394. Residues asparagine 268 and asparagine 303 are each glycosylated (N-linked (GlcNAc...) asparagine).

This sequence belongs to the immunoglobulin superfamily. CEA family.

The protein localises to the secreted. The chain is Pregnancy-specific beta-1-glycoprotein 3 (PSG3) from Homo sapiens (Human).